Consider the following 354-residue polypeptide: 3-isopropylmalate dehydrogenase (354 aa).

Residue 76-87 participates in NAD(+) binding; that stretch reads GPRWDGAKERPE. 4 residues coordinate substrate: R94, R104, R130, and D215. The Mg(2+) site is built by D215, D239, and D243. An NAD(+)-binding site is contributed by 273 to 285; sequence GSAPDIAGKNKAN.

It belongs to the isocitrate and isopropylmalate dehydrogenases family. LeuB type 1 subfamily. In terms of assembly, homodimer. Requires Mg(2+) as cofactor. Mn(2+) is required as a cofactor.

The protein resides in the cytoplasm. It catalyses the reaction (2R,3S)-3-isopropylmalate + NAD(+) = 4-methyl-2-oxopentanoate + CO2 + NADH. It functions in the pathway amino-acid biosynthesis; L-leucine biosynthesis; L-leucine from 3-methyl-2-oxobutanoate: step 3/4. Catalyzes the oxidation of 3-carboxy-2-hydroxy-4-methylpentanoate (3-isopropylmalate) to 3-carboxy-4-methyl-2-oxopentanoate. The product decarboxylates to 4-methyl-2 oxopentanoate. The sequence is that of 3-isopropylmalate dehydrogenase from Bacillus cereus (strain ZK / E33L).